A 415-amino-acid polypeptide reads, in one-letter code: Gamma-glutamyl phosphate reductase (415 aa).

It belongs to the gamma-glutamyl phosphate reductase family.

It is found in the cytoplasm. It catalyses the reaction L-glutamate 5-semialdehyde + phosphate + NADP(+) = L-glutamyl 5-phosphate + NADPH + H(+). It functions in the pathway amino-acid biosynthesis; L-proline biosynthesis; L-glutamate 5-semialdehyde from L-glutamate: step 2/2. Its function is as follows. Catalyzes the NADPH-dependent reduction of L-glutamate 5-phosphate into L-glutamate 5-semialdehyde and phosphate. The product spontaneously undergoes cyclization to form 1-pyrroline-5-carboxylate. The chain is Gamma-glutamyl phosphate reductase from Bacillus thuringiensis subsp. konkukian (strain 97-27).